Reading from the N-terminus, the 217-residue chain is ATP phosphoribosyltransferase (217 aa).

This sequence belongs to the ATP phosphoribosyltransferase family. Short subfamily. In terms of assembly, heteromultimer composed of HisG and HisZ subunits.

The protein localises to the cytoplasm. It carries out the reaction 1-(5-phospho-beta-D-ribosyl)-ATP + diphosphate = 5-phospho-alpha-D-ribose 1-diphosphate + ATP. Its pathway is amino-acid biosynthesis; L-histidine biosynthesis; L-histidine from 5-phospho-alpha-D-ribose 1-diphosphate: step 1/9. Catalyzes the condensation of ATP and 5-phosphoribose 1-diphosphate to form N'-(5'-phosphoribosyl)-ATP (PR-ATP). Has a crucial role in the pathway because the rate of histidine biosynthesis seems to be controlled primarily by regulation of HisG enzymatic activity. This is ATP phosphoribosyltransferase from Burkholderia orbicola (strain MC0-3).